The primary structure comprises 242 residues: Sugar fermentation stimulation protein homolog (242 aa).

Belongs to the SfsA family.

This is Sugar fermentation stimulation protein homolog from Enterococcus mundtii.